The following is a 228-amino-acid chain: AA9 family lytic polysaccharide monooxygenase A (228 aa).

Residues His-1 and His-86 each contribute to the Cu(2+) site. At His-1 the chain carries Methylhistidine. Intrachain disulfides connect Cys-56–Cys-178 and Cys-97–Cys-101. Asn-138 is a glycosylation site (N-linked (GlcNAc...) asparagine). Residues His-164 and Gln-173 each coordinate O2. A Cu(2+)-binding site is contributed by Tyr-175.

Belongs to the polysaccharide monooxygenase AA9 family. Cu(2+) serves as cofactor. Post-translationally, the catalytically essential N-terminal histidine His-22 is post-translationally modified by methylation to prevent protonation of the histidine side chain, and protect the critical active site of the enzyme from oxidative damage.

The protein localises to the secreted. The catalysed reaction is [(1-&gt;4)-beta-D-glucosyl]n+m + reduced acceptor + O2 = 4-dehydro-beta-D-glucosyl-[(1-&gt;4)-beta-D-glucosyl]n-1 + [(1-&gt;4)-beta-D-glucosyl]m + acceptor + H2O.. With respect to regulation, small amounts of H(2)O(2) boost LPMO activity, while higher amounts lead to inactivation of the enzyme. Functionally, lytic polysaccharide monooxygenase (LPMO) that depolymerizes crystalline and amorphous polysaccharides via the oxidation of scissile alpha- or beta-(1-4)-glycosidic bonds, yielding C1 and C4 oxidation product. Catalysis by LPMOs requires the reduction of the active-site copper from Cu(II) to Cu(I) by a reducing agent and H(2)O(2) or O(2) as a cosubstrate. Is able to cleave cellulose and xylan to produce C1- and C4-oxidized products. In Thermoascus aurantiacus, this protein is AA9 family lytic polysaccharide monooxygenase A.